The primary structure comprises 203 residues: Thymidylate kinase (203 aa).

An ATP-binding site is contributed by 10-17 (GIDGCGKT).

Belongs to the thymidylate kinase family.

It carries out the reaction dTMP + ATP = dTDP + ADP. Phosphorylation of dTMP to form dTDP in both de novo and salvage pathways of dTTP synthesis. This chain is Thymidylate kinase, found in Thermoanaerobacter pseudethanolicus (strain ATCC 33223 / 39E) (Clostridium thermohydrosulfuricum).